A 925-amino-acid polypeptide reads, in one-letter code: Antiviral innate immune response receptor RIG-I (925 aa).

2 CARD domains span residues 1–87 (MTTE…GLYE) and 92–172 (WDFK…KTLK). Residue S8 is modified to (Microbial infection) Phosphoserine. S8 bears the Phosphoserine mark. Residues K48, K96, K154, and K164 each participate in a glycyl lysine isopeptide (Lys-Gly) (interchain with G-Cter in ubiquitin) cross-link. T170 carries the post-translational modification Phosphothreonine. Residues K172, K181, K193, and K203 each participate in a glycyl lysine isopeptide (Lys-Gly) (interchain with G-Cter in ubiquitin) cross-link. Residues 218–925 (ECQNLSENSC…IPFDPAEMSK (708 aa)) are interaction with ZC3HAV1. The Helicase ATP-binding domain occupies 251-430 (ALPAMKGKNT…DEALDYICKL (180 aa)). ATP is bound at residue 264–271 (APTGCGKT). Residues 372–375 (DECH) carry the DECH box motif. A (Microbial infection) Deamidated asparagine; by herpes simplex virus 1/HHV-1 UL37 mark is found at N495 and N549. Residues 610 to 776 (KLEDLCFILQ…RLQTWDEAVF (167 aa)) form the Helicase C-terminal domain. A mediates interaction with RNF135 region spans residues 735-925 (GSKCFLLTSN…IPFDPAEMSK (191 aa)). Position 770 is a phosphothreonine; by CK2 (T770). Positions 794–925 (QEKPKPVPDK…IPFDPAEMSK (132 aa)) constitute an RLR CTR domain. Residue C810 participates in Zn(2+) binding. A Glycyl lysine isopeptide (Lys-Gly) (interchain with G-Cter in ubiquitin) cross-link involves residue K812. C813 is a binding site for Zn(2+). 2 positions are modified to phosphoserine; by CK2: S854 and S855. K858 carries the N6-acetyllysine modification. C864 and C869 together coordinate Zn(2+). K909 carries the N6-acetyllysine modification.

The protein belongs to the helicase family. RLR subfamily. As to quaternary structure, monomer; maintained as a monomer in an autoinhibited state. Upon binding of viral RNAs and conformational shift, homooligomerizes and forms filaments on these molecules. Interacts (via tandem CARD domain) with MAVS/IPS1 promoting its filamentation. Interacts with DHX58/LGP2, IKBKE, TBK1 and STING1. Interacts (via CARD domain) with TRIM25 (via SPRY domain). Interacts (double-stranded RNA-bound oligomeric form) with RNF135 (homodimer); involved in RNA length-dependent activation of the RIG-I signaling pathway. Interacts with CYLD. Interacts with NLRC5; blocks the interaction of MAVS/IPS1 to RIGI. Interacts with SRC. Interacts with DDX60. Interacts with isoform 2 of ZC3HAV1 (via zinc-fingers) in an RNA-dependent manner. Interacts (via tandem CARD domain) with SEC14L1; the interaction is direct and impairs the interaction of RIGI with MAVS/IPS1. Interacts with VCP/p97; interaction is direct and allows the recruitment of RNF125 and subsequent ubiquitination and degradation. Interacts with NOP53; may regulate RIGI through USP15-mediated 'Lys-63'-linked deubiquitination. Interacts with SIGLEC10, CBL and PTPN11; within a negative feedback loop leading to RIGI degradation. Interacts with LRRC25. Interacts with ZCCHC3; leading to activation of RIGI. Interacts with RNF123. Interacts with UBE2D3 and UBE2N; E2 ubiquitin ligases involved in RNF135-mediated ubiquitination of RIGI and activation of the RIG-I signaling pathway. Interacts with IFIT3. Interacts with DDX3X. Interacts with RTN3. Interacts with ARL16; this interaction is GTP-dependent and induced upon viral infection; this interaction suppresses the RNA sensing activity of RIGI. Interacts with DHX16; this interaction enhances RIGI-mediated antiviral response. Interacts with IRGM; promoting RIGI degradation. Interacts with IFI6; this interaction inhibits RIGI activation. Interacts with ECSIT; this interaction bridges RIGI to the MAVS complex at the mitochondrion. Interacts with YWHAE; this interaction drives RIGI at the mitochondrion. In terms of assembly, (Microbial infection) Interacts with protein Z of Guanarito virus, Machupo virus, Junin arenavirus and Sabia virus. This interaction disrupts its interaction with MAVS/IPS1, impeding downstream IRF3 and NF-kappa-B activation and resulting in decreased IFN-beta induction. (Microbial infection) Interacts (via CARD domain) with Human respiratory syncytial virus A non-structural protein 2 (NS2) and this interaction disrupts its interaction with MAVS/IPS1, impeding downstream IRF3 activation. As to quaternary structure, (Microbial infection) Interacts with Rotavirus A non-structural protein 1 (NSP1) and this interaction induces down-regulation of RIGI. In terms of assembly, (Microbial infection) Interacts with paramyxoviruses (Sendai virus, Nipah virus, Measles virus and Parainfluenza virus 5) protein V; this interaction inhibits TRIM25-mediated ubiquitination of RIG-I and prevents downstream RIG-I signaling thereby inhibiting the IFN responses. (Microbial infection) Interacts with herpes simplex virus 1 protein US11; this interaction prevents the interaction of MAVS/IPS1 to RIGI. As to quaternary structure, (Microbial infection) Interacts with herpes simplex virus 1 protein UL37; this interaction deaminates RIGI and inhibits its activation. In terms of assembly, (Microbial infection) Interacts with Severe fever with thrombocytopenia virus (SFTSV) NSs; this interaction this interaction sequesters RIGI in NSs-induced cytoplasmic inclusion bodies thereby inhibiting the IFN responses. Post-translationally, phosphorylated in resting cells and dephosphorylated in RNA virus-infected cells. Phosphorylation at Thr-770, Ser-854 and Ser-855 results in inhibition of its activity while dephosphorylation at these sites results in its activation. In terms of processing, ubiquitinated. 'Lys-63' ubiquitination by RNF135, which occurs after RNA-binding and homodimerization, releases the autoinhibition of the CARD domains by the RLR CTR domain, an essential step in the activation of the RIG-I signaling pathway. Lys-172 is the critical site of ubiquitination for MAVS/IPS1 binding and to induce anti-viral signal transduction. Lys-154, Lys-164 and Lys-172 are shared sites for RNF135-mediated and TRIM4-mediated ubiquitination. Also undergoes 'Lys-48' ubiquitination at Lys-181 by RNF125 that leads to proteasomal degradation. 'Lys-48' ubiquitination follows viral infection and is enhanced by 'Lys-63'-linked ubiquitination of the CARD domains that promotes interaction with VCP/p97 and subsequent recruitment of RNF125. Within a negative feedback loop involving SIGLEC10 and PTPN11, 'Lys-48' ubiquitination at Lys-812 by CBL also elicits the proteasomal degradation of RIGI. Deubiquitinated by CYLD, a protease that selectively cleaves 'Lys-63'-linked ubiquitin chains. Also probably deubiquitinated by USP17L2/USP17 that cleaves 'Lys-48'- and 'Lys-63'-linked ubiquitin chains and positively regulates the receptor. Ubiquitinated by TRIM40 via 'Lys-48'-linked ubiquitination; leading to proteasomal degradation. Deubiquitinated by USP27X that cleaves 'Lys-63'-linked ubiquitin chains and inhibits the innate immune receptor activity. Deubiquitinated by USP3 that also cleaves 'Lys-63'-linked ubiquitin chains and inhibits the innate immune receptor activity. Undergoes 'Lys-48'-linked ubiquitination catalyzed by MARCHF5 at Lys-193 and Lys-203, leading to proteasomal degradation. Phosphorylated at Ser-8 and Thr-170; these phosphorylations suppresse the TRIM25-mediated 'Lys-63'-linked ubiquitination of RIG-I and thereby prevents RIG-I downstream signaling. Dephosphorylated by phosphatases PPP1CA/PPP1CC; this step is essential to activate RIGI and initiate downstream signaling. Post-translationally, ISGylated. Conjugated to ubiquitin-like protein ISG15 upon IFN-beta stimulation. ISGylation negatively regulates its function in antiviral signaling response. In terms of processing, sumoylated, probably by MUL1; inhibiting its polyubiquitination. Acetylated in response to RNA virus infection. Deacetylated by HDAC6 in the presence of viral mRNAs which is required for detection of viral RNA by RIGI. Post-translationally, (Microbial infection) Deamidated on Asn-495 and Asn-549 by herpes simplex virus 1 protein UL37. These modifications eliminate RIGI detection of viral RNA and restriction of viral replication. In terms of processing, degraded via selective autophagy following interaction with IRGM. IRGM promotes RIGI recruitment to autophagosome membranes, promoting its SQSTM1/p62-dependent autophagic degradation. (Microbial infection) Cleaved by the protease 3C of coxsackievirus B3, poliovirus and enterovirus 71 allowing the virus to disrupt the host type I interferon production. Post-translationally, (Microbial infection) Phosphorylated at Ser-8 by herpes simplex virus 1 protein US3 leading to inhibition of critical RIGI activation steps. In terms of tissue distribution, present in vascular smooth cells (at protein level).

The protein localises to the cytoplasm. The protein resides in the cell projection. It localises to the ruffle membrane. Its subcellular location is the cytoskeleton. It is found in the cell junction. The protein localises to the tight junction. The catalysed reaction is ATP + H2O = ADP + phosphate + H(+). Functionally, innate immune receptor that senses cytoplasmic viral nucleic acids and activates a downstream signaling cascade leading to the production of type I interferons and pro-inflammatory cytokines. Forms a ribonucleoprotein complex with viral RNAs on which it homooligomerizes to form filaments. The homooligomerization allows the recruitment of RNF135 an E3 ubiquitin-protein ligase that activates and amplifies the RIG-I-mediated antiviral signaling in an RNA length-dependent manner through ubiquitination-dependent and -independent mechanisms. Upon activation, associates with mitochondria antiviral signaling protein (MAVS/IPS1) that activates the IKK-related kinases TBK1 and IKBKE which in turn phosphorylate the interferon regulatory factors IRF3 and IRF7, activating transcription of antiviral immunological genes including the IFN-alpha and IFN-beta interferons. Ligands include 5'-triphosphorylated ssRNAs and dsRNAs but also short dsRNAs (&lt;1 kb in length). In addition to the 5'-triphosphate moiety, blunt-end base pairing at the 5'-end of the RNA is very essential. Overhangs at the non-triphosphorylated end of the dsRNA RNA have no major impact on its activity. A 3'overhang at the 5'triphosphate end decreases and any 5'overhang at the 5' triphosphate end abolishes its activity. Detects both positive and negative strand RNA viruses including members of the families Paramyxoviridae: Human respiratory syncytial virus and measles virus (MeV), Rhabdoviridae: vesicular stomatitis virus (VSV), Orthomyxoviridae: influenza A and B virus, Flaviviridae: Japanese encephalitis virus (JEV), hepatitis C virus (HCV), dengue virus (DENV) and west Nile virus (WNV). It also detects rotaviruses and reoviruses. Detects and binds to SARS-CoV-2 RNAs which is inhibited by m6A RNA modifications. Also involved in antiviral signaling in response to viruses containing a dsDNA genome such as Epstein-Barr virus (EBV). Detects dsRNA produced from non-self dsDNA by RNA polymerase III, such as Epstein-Barr virus-encoded RNAs (EBERs). May play important roles in granulocyte production and differentiation, bacterial phagocytosis and in the regulation of cell migration. The sequence is that of Antiviral innate immune response receptor RIG-I from Homo sapiens (Human).